The primary structure comprises 233 residues: Transcriptional regulatory protein PrrA (233 aa).

Residues 9 to 123 (RVLVVDDDSD…ELVARVKALL (115 aa)) form the Response regulatory domain. D58 bears the 4-aspartylphosphate mark. Positions 134 to 232 (SETITVGPLE…VRGVGFVLRM (99 aa)) form a DNA-binding region, ompR/PhoB-type.

Post-translationally, phosphorylated by PrrB at Asp-58.

It is found in the cytoplasm. Member of the two-component regulatory system PrrB/PrrA that is involved specifically in early intracellular multiplication of Mycobacterium and is essential for its viability. Upon phosphorylation by PrrB, functions as a transcription regulator by direct binding to promoter regions of target genes to positively regulate their expression. Autoregulates its own expression. This is Transcriptional regulatory protein PrrA (prrA) from Mycobacterium bovis (strain ATCC BAA-935 / AF2122/97).